Consider the following 233-residue polypeptide: Nucleoside diphosphate kinase 2, chloroplastic (233 aa).

The transit peptide at 1 to 67 directs the protein to the chloroplast; it reads MEAMSGLSSP…LISHSLPRKK (67 aa). The ATP site is built by lysine 93, phenylalanine 141, arginine 169, threonine 175, arginine 186, and asparagine 196. The active-site Pros-phosphohistidine intermediate is the histidine 199.

Belongs to the NDK family. Mg(2+) is required as a cofactor.

The protein resides in the plastid. Its subcellular location is the chloroplast. The catalysed reaction is a 2'-deoxyribonucleoside 5'-diphosphate + ATP = a 2'-deoxyribonucleoside 5'-triphosphate + ADP. It catalyses the reaction a ribonucleoside 5'-diphosphate + ATP = a ribonucleoside 5'-triphosphate + ADP. Its function is as follows. Major role in the synthesis of nucleoside triphosphates other than ATP. The ATP gamma phosphate is transferred to the NDP beta phosphate via a ping-pong mechanism, using a phosphorylated active-site intermediate. The polypeptide is Nucleoside diphosphate kinase 2, chloroplastic (NDPK2) (Spinacia oleracea (Spinach)).